Reading from the N-terminus, the 434-residue chain is Putative nuclease OPG089 (434 aa).

Residues aspartate 33, aspartate 74, glutamate 168, aspartate 170, aspartate 196, and aspartate 198 each contribute to the Mg(2+) site.

It belongs to the XPG/RAD2 endonuclease family. FEN1 subfamily. Mg(2+) serves as cofactor.

It localises to the virion. Putative nuclease that seems to be required for double-strand break repair, homologous recombination, and production of full-length viral genomic DNA. In Homo sapiens (Human), this protein is Putative nuclease OPG089 (OPG089).